The sequence spans 147 residues: UPAR/Ly6 domain-containing protein CG9338 (147 aa).

An N-terminal signal peptide occupies residues Met1 to Ala23. Residues Ile24 to Thr126 are Extracellular-facing. 5 cysteine pairs are disulfide-bonded: Cys26/Cys72, Cys29/Cys37, Cys51/Cys89, Cys101/Cys115, and Cys118/Cys123. Asn68 carries N-linked (GlcNAc...) asparagine glycosylation. Asn124 is lipidated: GPI-anchor amidated asparagine. The propeptide at Gly125–Ala147 is removed in mature form. The chain crosses the membrane as a helical span at residues Ser127–Ala147.

The protein belongs to the quiver family.

The protein localises to the cell membrane. Functionally, may be involved in regulating neuron excitability. In Drosophila melanogaster (Fruit fly), this protein is UPAR/Ly6 domain-containing protein CG9338.